We begin with the raw amino-acid sequence, 295 residues long: Indole-3-glycerol phosphate synthase (295 aa).

This sequence belongs to the TrpC family.

It carries out the reaction 1-(2-carboxyphenylamino)-1-deoxy-D-ribulose 5-phosphate + H(+) = (1S,2R)-1-C-(indol-3-yl)glycerol 3-phosphate + CO2 + H2O. Its pathway is amino-acid biosynthesis; L-tryptophan biosynthesis; L-tryptophan from chorismate: step 4/5. The polypeptide is Indole-3-glycerol phosphate synthase (Prochlorococcus marinus (strain MIT 9211)).